The chain runs to 889 residues: F-BAR domain only protein 1 (889 aa).

The F-BAR domain maps to 1–248 (MSYFGEHFWG…NIENVSVEML (248 aa)). The mediates membrane-binding stretch occupies residues 1–275 (MSYFGEHFWG…LDFEAYSAAA (275 aa)). Positions 156 to 195 (TSQKEMDKAETKTKKAAESLRRSVEKYNSARADFEQKMLD) form a coiled coil. Residues 267-442 (DFEAYSAAAL…KNLFGPPLES (176 aa)) form a mediates interaction with the adaptor protein complex AP-2 region. The tract at residues 294 to 352 (LSRREREPEPPAAVDFLEPDSGTCPEVDEEGFTVRPDVTQNSTAEPSRFSSSDSDFDDE) is disordered. Phosphoserine is present on residues Ser295, Ser347, and Ser372. Residues 382-596 (ATAGSLILPP…SPLGSSAAST (215 aa)) form a disordered region. Over residues 450-469 (TGSSSLGFTSSPSPFSSSSP) the composition is skewed to low complexity. Residues 496–511 (PGTPQSPPSCRAPPPE) show a composition bias toward pro residues. Phosphoserine is present on Ser530. Residues 580–596 (LSRSLSPSPLGSSAAST) are compositionally biased toward low complexity. Residues 609-889 (HGVSRGPSPV…FATGMYLVSC (281 aa)) form a mediates interaction with AGFG1, CALM, DAB2, EPS15, EPS15R, ITSN1 and clathrin region. Residue Ser616 is modified to Phosphoserine. In terms of domain architecture, MHD spans 625–888 (ALPIATAFTE…RFATGMYLVS (264 aa)). The interval 826 to 849 (AGGSGRLSASWEPLSGPSTPSPVA) is disordered.

Belongs to the FCHO family. In terms of assembly, may oligomerize and form homotetramer. Interacts with AP2A2 and AP2B1; 2 subunits of the adaptor protein complex AP-2. Interacts with DAB2. Interacts with clathrin (CLTC or CLTCL1). Interacts with EPS15, EPS15R and ITSN1. Interacts with AGFG1 and CALM. May interact with ACVR1; linking this receptor to clathrin-mediated endocytosis. In terms of tissue distribution, predominantly expressed in lymphoid cells.

The protein resides in the membrane. It localises to the clathrin-coated pit. Its function is as follows. Functions in an early step of clathrin-mediated endocytosis. Has both a membrane binding/bending activity and the ability to recruit proteins essential to the formation of functional clathrin-coated pits. May regulate Bmp signaling by regulating clathrin-mediated endocytosis of Bmp receptors. Involved in the regulation of T-cell poliferation and activation. Affects TCR clustering upon receptor triggering and modulates its internalisation, playing a role in TCR-dependent T-cell activation. This Homo sapiens (Human) protein is F-BAR domain only protein 1.